Reading from the N-terminus, the 1925-residue chain is Plexin-D1 (1925 aa).

The segment covering 1–21 has biased composition (low complexity); sequence MARRAAGGAPPSARAAAAVPL. Residues 1–26 are disordered; it reads MARRAAGGAPPSARAAAAVPLRPRPH. Residues 1–48 form the signal peptide; sequence MARRAAGGAPPSARAAAAVPLRPRPHSRGPGLLPLPLLLLLGAARAGA. Positions 49 to 548 constitute a Sema domain; it reads LEIQRRFPSP…TSHQMARVKV (500 aa). At 49–1271 the chain is on the extracellular side; sequence LEIQRRFPSP…TLQLGGSETA (1223 aa). Intrachain disulfides connect Cys106/Cys116 and Cys142/Cys150. Asn157 and Asn226 each carry an N-linked (GlcNAc...) asparagine glycan. 2 cysteine pairs are disulfide-bonded: Cys324–Cys447 and Cys347–Cys391. Asn483 carries an N-linked (GlcNAc...) asparagine glycan. 5 disulfide bridges follow: Cys551–Cys568, Cys557–Cys602, Cys560–Cys577, Cys571–Cys583, and Cys639–Cys663. IPT/TIG domains are found at residues 893-977, 983-1065, and 1071-1145; these read PEIR…SREQ, PTVH…NLTF, and PVIT…FING. The N-linked (GlcNAc...) asparagine glycan is linked to Asn967. Asn1120 carries an N-linked (GlcNAc...) asparagine glycan. A helical membrane pass occupies residues 1272 to 1292; the sequence is IVVSIVICSVLLLLSVVALFV. Residues 1293 to 1925 lie on the Cytoplasmic side of the membrane; sequence FCTKSRRAER…NNIYECYSEA (633 aa).

The protein belongs to the plexin family. Interacts with NRP1 and SEMA4A. Interacts with SH3BP1; they dissociate upon SEMA3E binding to PLXND1 allowing SH3BP1 to transduce downstream signal through RAC1 inactivation. As to expression, detected in embryonic heart and vascular endothelium, brain, dorsal root ganglia, adrenal gland, lung mesenchyme, small intestine and in the ossification centers of vertebral bodies.

It localises to the cell membrane. Its subcellular location is the cell projection. It is found in the lamellipodium membrane. In terms of biological role, cell surface receptor for SEMA4A and for class 3 semaphorins, such as SEMA3A, SEMA3C and SEMA3E. Plays an important role in cell-cell signaling, and in regulating the migration of a wide spectrum of cell types. Regulates the migration of thymocytes in the medulla. Regulates endothelial cell migration. Plays an important role in ensuring the specificity of synapse formation. Mediates anti-angiogenic signaling in response to SEMA3E. Required for normal development of the heart and vasculature. The polypeptide is Plexin-D1 (Plxnd1) (Mus musculus (Mouse)).